The chain runs to 215 residues: ATP-dependent Clp protease proteolytic subunit (215 aa).

The Nucleophile role is filled by S116. Residue H141 is part of the active site.

Belongs to the peptidase S14 family. Fourteen ClpP subunits assemble into 2 heptameric rings which stack back to back to give a disk-like structure with a central cavity, resembling the structure of eukaryotic proteasomes.

It is found in the cytoplasm. The catalysed reaction is Hydrolysis of proteins to small peptides in the presence of ATP and magnesium. alpha-casein is the usual test substrate. In the absence of ATP, only oligopeptides shorter than five residues are hydrolyzed (such as succinyl-Leu-Tyr-|-NHMec, and Leu-Tyr-Leu-|-Tyr-Trp, in which cleavage of the -Tyr-|-Leu- and -Tyr-|-Trp bonds also occurs).. Functionally, cleaves peptides in various proteins in a process that requires ATP hydrolysis. Has a chymotrypsin-like activity. Plays a major role in the degradation of misfolded proteins. The sequence is that of ATP-dependent Clp protease proteolytic subunit from Psychrobacter cryohalolentis (strain ATCC BAA-1226 / DSM 17306 / VKM B-2378 / K5).